The sequence spans 883 residues: Aldehyde-alcohol dehydrogenase (883 aa).

The interval 13 to 456 (KLVAEKHVDE…DNVSAINLLN (444 aa)) is aldehyde dehydrogenase. Residues 121 to 126 (ITPTTN), glycine 206, and glycine 224 each bind NAD(+). Residue cysteine 257 is the Nucleophile of the active site. Residues glutamate 355, leucine 435, and 438-443 (GSYGRN) contribute to the NAD(+) site. A linker region spans residues 457–464 (IKKVGRRR). Residues aspartate 500, aspartate 534, 561–565 (GSPMD), 612–613 (TT), valine 625, lysine 634, and leucine 653 each bind NAD(+). Fe cation-binding residues include aspartate 668, histidine 672, histidine 736, and histidine 750.

The protein in the N-terminal section; belongs to the aldehyde dehydrogenase family. In the C-terminal section; belongs to the iron-containing alcohol dehydrogenase family. Requires Fe(2+) as cofactor.

The enzyme catalyses an aldehyde + NAD(+) + H2O = a carboxylate + NADH + 2 H(+). The catalysed reaction is ethanol + NAD(+) = acetaldehyde + NADH + H(+). Has alcohol dehydrogenase activity. Has aldehyde dehydrogenase activity. Plays a role in enhancing virulence in mice, under ethanol stress conditions, perhaps by inducing expression of pneumolysin (Ply) and increasing production of hydrogen peroxide H(2)O(2). May be considered a potential virulence factor. The chain is Aldehyde-alcohol dehydrogenase from Streptococcus pneumoniae serotype 2 (strain D39 / NCTC 7466).